Reading from the N-terminus, the 314-residue chain is uncharacterized protein (314 aa).

Transmembrane regions (helical) follow at residues Leu-23 to Phe-43 and Met-98 to Thr-118. The span at Gly-165–Thr-184 shows a compositional bias: gly residues. The interval Gly-165–Glu-314 is disordered. Residues Gly-190–Thr-202 show a composition bias toward pro residues. Low complexity-rich tracts occupy residues Pro-203–Thr-212 and Ala-219–Pro-232. Residues Pro-221–Ala-241 form a helical membrane-spanning segment. Residues Leu-294 to Glu-314 show a composition bias toward basic and acidic residues.

The protein resides in the cell membrane. This is an uncharacterized protein from Mycobacterium tuberculosis (strain ATCC 25618 / H37Rv).